Reading from the N-terminus, the 291-residue chain is uncharacterized protein (291 aa).

Helical transmembrane passes span 42–62 (IFFFLILILVFVLWILVRALW) and 86–106 (TIFPCFISIFIVEPSFALALD).

It belongs to the cytochrome c oxidase subunit 2 family.

It localises to the mitochondrion membrane. This is an uncharacterized protein from Arabidopsis thaliana (Mouse-ear cress).